Consider the following 333-residue polypeptide: Holliday junction branch migration complex subunit RuvB (333 aa).

A large ATPase domain (RuvB-L) region spans residues 1–181 (MTRILDNDLI…FGITGHMEYY (181 aa)). ATP is bound by residues Leu20, Arg21, Gly62, Lys65, Thr66, Thr67, 128 to 130 (EDF), Arg171, Tyr181, and Arg218. Thr66 contributes to the Mg(2+) binding site. Residues 182–252 (QTADLTEIVE…ITDKALTMLD (71 aa)) are small ATPAse domain (RuvB-S). The interval 255–333 (QEGLDYVDQK…HLGYPYEKKH (79 aa)) is head domain (RuvB-H). DNA is bound by residues Arg291, Arg310, Arg312, and Arg315.

Belongs to the RuvB family. Homohexamer. Forms an RuvA(8)-RuvB(12)-Holliday junction (HJ) complex. HJ DNA is sandwiched between 2 RuvA tetramers; dsDNA enters through RuvA and exits via RuvB. An RuvB hexamer assembles on each DNA strand where it exits the tetramer. Each RuvB hexamer is contacted by two RuvA subunits (via domain III) on 2 adjacent RuvB subunits; this complex drives branch migration. In the full resolvosome a probable DNA-RuvA(4)-RuvB(12)-RuvC(2) complex forms which resolves the HJ.

The protein localises to the cytoplasm. The catalysed reaction is ATP + H2O = ADP + phosphate + H(+). In terms of biological role, the RuvA-RuvB-RuvC complex processes Holliday junction (HJ) DNA during genetic recombination and DNA repair, while the RuvA-RuvB complex plays an important role in the rescue of blocked DNA replication forks via replication fork reversal (RFR). RuvA specifically binds to HJ cruciform DNA, conferring on it an open structure. The RuvB hexamer acts as an ATP-dependent pump, pulling dsDNA into and through the RuvAB complex. RuvB forms 2 homohexamers on either side of HJ DNA bound by 1 or 2 RuvA tetramers; 4 subunits per hexamer contact DNA at a time. Coordinated motions by a converter formed by DNA-disengaged RuvB subunits stimulates ATP hydrolysis and nucleotide exchange. Immobilization of the converter enables RuvB to convert the ATP-contained energy into a lever motion, pulling 2 nucleotides of DNA out of the RuvA tetramer per ATP hydrolyzed, thus driving DNA branch migration. The RuvB motors rotate together with the DNA substrate, which together with the progressing nucleotide cycle form the mechanistic basis for DNA recombination by continuous HJ branch migration. Branch migration allows RuvC to scan DNA until it finds its consensus sequence, where it cleaves and resolves cruciform DNA. This chain is Holliday junction branch migration complex subunit RuvB, found in Streptococcus equi subsp. zooepidemicus (strain MGCS10565).